The chain runs to 198 residues: Virion infectivity factor (198 aa).

Positions 1 to 31 are disordered; it reads MERTLQSVVGRRRGSSNRGRGKNSLISTPSY. The span at 10–21 shows a compositional bias: basic residues; it reads GRRRGSSNRGRG.

Its subcellular location is the host cytoplasm. It is found in the virion. In terms of biological role, determines virus infectivity. The polypeptide is Virion infectivity factor (vif) (Bovine immunodeficiency virus (strain R29) (BIV)).